Here is a 314-residue protein sequence, read N- to C-terminus: Probable RuBisCO transcriptional regulator (314 aa).

Residues 6-63 enclose the HTH lysR-type domain; it reads FTLDQLKIIKTIHREGSFKTAAKKLYISQPAVSRQVQNLERQLNTPIFYRDKRKARLT. Positions 23–42 form a DNA-binding region, H-T-H motif; that stretch reads FKTAAKKLYISQPAVSRQVQ.

This sequence belongs to the LysR transcriptional regulatory family.

Its subcellular location is the plastid. It localises to the chloroplast. Functionally, trans-acting transcriptional regulator of RuBisCO genes (rbcL and rbcS) expression. The protein is Probable RuBisCO transcriptional regulator (rbcR) of Emiliania huxleyi (Coccolithophore).